Here is a 723-residue protein sequence, read N- to C-terminus: LPS-assembly protein LptD (723 aa).

A signal peptide spans 1–23 (MNTLKLCLILYACLVLLPVRVMS).

This sequence belongs to the LptD family. As to quaternary structure, component of the lipopolysaccharide transport and assembly complex. Interacts with LptE and LptA.

The protein resides in the cell outer membrane. Functionally, together with LptE, is involved in the assembly of lipopolysaccharide (LPS) at the surface of the outer membrane. This is LPS-assembly protein LptD from Nitrosomonas europaea (strain ATCC 19718 / CIP 103999 / KCTC 2705 / NBRC 14298).